The chain runs to 481 residues: 3-isopropylmalate dehydratase large subunit (481 aa).

[4Fe-4S] cluster contacts are provided by cysteine 363, cysteine 423, and cysteine 426. Residues glycine 437–proline 463 are disordered.

The protein belongs to the aconitase/IPM isomerase family. LeuC type 1 subfamily. In terms of assembly, heterodimer of LeuC and LeuD. Requires [4Fe-4S] cluster as cofactor.

It carries out the reaction (2R,3S)-3-isopropylmalate = (2S)-2-isopropylmalate. Its pathway is amino-acid biosynthesis; L-leucine biosynthesis; L-leucine from 3-methyl-2-oxobutanoate: step 2/4. In terms of biological role, catalyzes the isomerization between 2-isopropylmalate and 3-isopropylmalate, via the formation of 2-isopropylmaleate. This Salinispora arenicola (strain CNS-205) protein is 3-isopropylmalate dehydratase large subunit.